The following is a 48-amino-acid chain: Phospholipase A2 superbin d (48 aa).

Ca(2+)-binding residues include Y28, G30, and G32. C29 and C45 are oxidised to a cystine. H48 is an active-site residue.

It depends on Ca(2+) as a cofactor. As to expression, expressed by the venom gland.

It is found in the secreted. The enzyme catalyses a 1,2-diacyl-sn-glycero-3-phosphocholine + H2O = a 1-acyl-sn-glycero-3-phosphocholine + a fatty acid + H(+). Snake venom phospholipase A2 (PLA2) that inhibits collagen-induced platelet aggregation. In terms of inhibition of platelet aggregation, superbin d is less potent as superbin a, b, and c. PLA2 catalyzes the calcium-dependent hydrolysis of the 2-acyl groups in 3-sn-phosphoglycerides. This Austrelaps superbus (Lowland copperhead snake) protein is Phospholipase A2 superbin d.